The sequence spans 332 residues: MAMASASSSSSSISVIIFLLLAPLCLSREPPSQIPNGTLDLSLLWYGQFTPTQKERVHDFIESLNFDAKEGLDPKVSAWWKVVESYQERFEVKDIYRQKKSNRTVAPRIKVKVVRSYVDEKMKYGKELTMGNGEKLVETAIGNMSKVVPVVLLSAQVRAHGVGFCDGTCQHNALAKIKGQKEPRRYIMVSNPEVECPGECAWPFHTADKGPRGMTYQPASGEVGADALVIQLATGLADLATNPDLTKSLFKSETTPYNDDVKKNHESSSMYIVDPATKCTRVFGSGAFPGFTGRIRVDPITGGAFNSHGINHLKFLIPSIWDPKTKSCWTPM.

Residues 1–27 (MAMASASSSSSSISVIIFLLLAPLCLS) form the signal peptide. N-linked (GlcNAc...) asparagine glycosylation is found at Asn-36, Asn-102, and Asn-143.

The protein belongs to the EXORDIUM family.

The protein resides in the secreted. It localises to the extracellular space. It is found in the apoplast. Its function is as follows. May play a role in a brassinosteroid-dependent regulation of growth and development. This is Protein EXORDIUM-like 6 (EXL6) from Arabidopsis thaliana (Mouse-ear cress).